Reading from the N-terminus, the 333-residue chain is Glycerol-3-phosphate dehydrogenase [NAD(P)+] (333 aa).

NADPH is bound by residues serine 10, tryptophan 11, histidine 31, arginine 32, and lysine 105. Sn-glycerol 3-phosphate contacts are provided by lysine 105, glycine 136, and serine 138. Residue alanine 140 coordinates NADPH. Positions 191, 244, 254, 255, and 256 each coordinate sn-glycerol 3-phosphate. Lysine 191 serves as the catalytic Proton acceptor. NADPH is bound at residue arginine 255. Residues valine 279 and glutamate 281 each coordinate NADPH.

The protein belongs to the NAD-dependent glycerol-3-phosphate dehydrogenase family.

It is found in the cytoplasm. The catalysed reaction is sn-glycerol 3-phosphate + NAD(+) = dihydroxyacetone phosphate + NADH + H(+). It catalyses the reaction sn-glycerol 3-phosphate + NADP(+) = dihydroxyacetone phosphate + NADPH + H(+). The protein operates within membrane lipid metabolism; glycerophospholipid metabolism. In terms of biological role, catalyzes the reduction of the glycolytic intermediate dihydroxyacetone phosphate (DHAP) to sn-glycerol 3-phosphate (G3P), the key precursor for phospholipid synthesis. The polypeptide is Glycerol-3-phosphate dehydrogenase [NAD(P)+] (Chlorobium limicola (strain DSM 245 / NBRC 103803 / 6330)).